Reading from the N-terminus, the 462-residue chain is 3-isopropylmalate dehydratase large subunit (462 aa).

[4Fe-4S] cluster contacts are provided by Cys-337, Cys-397, and Cys-400.

It belongs to the aconitase/IPM isomerase family. LeuC type 1 subfamily. Heterodimer of LeuC and LeuD. [4Fe-4S] cluster is required as a cofactor.

It catalyses the reaction (2R,3S)-3-isopropylmalate = (2S)-2-isopropylmalate. Its pathway is amino-acid biosynthesis; L-leucine biosynthesis; L-leucine from 3-methyl-2-oxobutanoate: step 2/4. Its function is as follows. Catalyzes the isomerization between 2-isopropylmalate and 3-isopropylmalate, via the formation of 2-isopropylmaleate. This Listeria monocytogenes serovar 1/2a (strain ATCC BAA-679 / EGD-e) protein is 3-isopropylmalate dehydratase large subunit.